Reading from the N-terminus, the 29-residue chain is Photosystem I reaction center subunit XII (29 aa).

The chain crosses the membrane as a helical span at residues 7-26 (IFVALILALFSFVLAIRLGT).

This sequence belongs to the PsaM family.

It is found in the plastid. It localises to the chloroplast thylakoid membrane. This is Photosystem I reaction center subunit XII from Guillardia theta (Cryptophyte).